A 207-amino-acid chain; its full sequence is Protein GrpE (207 aa).

This sequence belongs to the GrpE family. As to quaternary structure, homodimer.

The protein localises to the cytoplasm. Functionally, participates actively in the response to hyperosmotic and heat shock by preventing the aggregation of stress-denatured proteins, in association with DnaK and GrpE. It is the nucleotide exchange factor for DnaK and may function as a thermosensor. Unfolded proteins bind initially to DnaJ; upon interaction with the DnaJ-bound protein, DnaK hydrolyzes its bound ATP, resulting in the formation of a stable complex. GrpE releases ADP from DnaK; ATP binding to DnaK triggers the release of the substrate protein, thus completing the reaction cycle. Several rounds of ATP-dependent interactions between DnaJ, DnaK and GrpE are required for fully efficient folding. This is Protein GrpE from Pelodictyon phaeoclathratiforme (strain DSM 5477 / BU-1).